The chain runs to 354 residues: UPF0425 pyridoxal phosphate-dependent protein MMP0002 (354 aa).

Lys210 is modified (N6-(pyridoxal phosphate)lysine).

The protein belongs to the UPF0425 family. The cofactor is pyridoxal 5'-phosphate.

The protein is UPF0425 pyridoxal phosphate-dependent protein MMP0002 of Methanococcus maripaludis (strain DSM 14266 / JCM 13030 / NBRC 101832 / S2 / LL).